Reading from the N-terminus, the 232-residue chain is Orotate phosphoribosyltransferase (232 aa).

5-phospho-alpha-D-ribose 1-diphosphate-binding positions include Arg-107, Lys-108, Lys-111, His-113, and 133 to 141 (EDLTTAGGS). Thr-137 contributes to the orotate binding site.

It belongs to the purine/pyrimidine phosphoribosyltransferase family. PyrE subfamily. Homodimer. Requires Mg(2+) as cofactor.

It carries out the reaction orotidine 5'-phosphate + diphosphate = orotate + 5-phospho-alpha-D-ribose 1-diphosphate. It participates in pyrimidine metabolism; UMP biosynthesis via de novo pathway; UMP from orotate: step 1/2. In terms of biological role, catalyzes the transfer of a ribosyl phosphate group from 5-phosphoribose 1-diphosphate to orotate, leading to the formation of orotidine monophosphate (OMP). The protein is Orotate phosphoribosyltransferase of Agrobacterium fabrum (strain C58 / ATCC 33970) (Agrobacterium tumefaciens (strain C58)).